The primary structure comprises 275 residues: Urease accessory protein UreD (275 aa).

It belongs to the UreD family. UreD, UreF and UreG form a complex that acts as a GTP-hydrolysis-dependent molecular chaperone, activating the urease apoprotein by helping to assemble the nickel containing metallocenter of UreC. The UreE protein probably delivers the nickel.

The protein resides in the cytoplasm. Its function is as follows. Required for maturation of urease via the functional incorporation of the urease nickel metallocenter. In Cereibacter sphaeroides (strain ATCC 17029 / ATH 2.4.9) (Rhodobacter sphaeroides), this protein is Urease accessory protein UreD.